Here is a 172-residue protein sequence, read N- to C-terminus: Bifunctional protein PyrR (172 aa).

A PRPP-binding motif is present at residues 90-102 (LVLIDDVLMSGRT).

The protein belongs to the purine/pyrimidine phosphoribosyltransferase family. PyrR subfamily.

It carries out the reaction UMP + diphosphate = 5-phospho-alpha-D-ribose 1-diphosphate + uracil. In terms of biological role, regulates the transcription of the pyrimidine nucleotide (pyr) operon in response to exogenous pyrimidines. Its function is as follows. Also displays a weak uracil phosphoribosyltransferase activity which is not physiologically significant. This Pseudomonas putida (strain W619) protein is Bifunctional protein PyrR.